A 133-amino-acid chain; its full sequence is Egg protein CP422 (133 aa).

The N-terminal stretch at 1–21 (MHECMIVFFIFAVVSIYYADA) is a signal peptide. 3 cysteine pairs are disulfide-bonded: cysteine 107/cysteine 121, cysteine 114/cysteine 125, and cysteine 120/cysteine 130.

The protein resides in the secreted. The chain is Egg protein CP422 (CP422) from Schistosoma japonicum (Blood fluke).